The sequence spans 115 residues: Large ribosomal subunit protein bL19 (115 aa).

It belongs to the bacterial ribosomal protein bL19 family.

This protein is located at the 30S-50S ribosomal subunit interface and may play a role in the structure and function of the aminoacyl-tRNA binding site. The chain is Large ribosomal subunit protein bL19 from Escherichia coli O139:H28 (strain E24377A / ETEC).